The following is a 656-amino-acid chain: Nuclear pore complex protein Nup85 (656 aa).

M1 carries the N-acetylmethionine modification. N6-acetyllysine is present on K92. S223 bears the Phosphoserine mark.

Belongs to the nucleoporin Nup85 family. Component of the nuclear pore complex (NPC). Component of the NPC Nup107-160 subcomplex, consisting of at least NUP107, NUP98/Nup96, NUP160, NUP133, NUP85, NUP37, NUP43 and SEC13. Interacts with NUP160, NUP133 and SEC13. Interacts with NUP37, NUP107 and NUP43. Interacts with CCR2.

It is found in the nucleus. The protein resides in the nuclear pore complex. The protein localises to the chromosome. Its subcellular location is the centromere. It localises to the kinetochore. It is found in the cytoplasm. The protein resides in the cytoskeleton. The protein localises to the spindle. Its subcellular location is the nucleus membrane. Functionally, essential component of the nuclear pore complex (NPC) that seems to be required for NPC assembly and maintenance. As part of the NPC Nup107-160 subcomplex plays a role in RNA export and in tethering NUP96/Nup98 and NUP153 to the nucleus. The Nup107-160 complex seems to be required for spindle assembly during mitosis. NUP85 is required for membrane clustering of CCL2-activated CCR2. Seems to be involved in CCR2-mediated chemotaxis of monocytes and may link activated CCR2 to the phosphatidyl-inositol 3-kinase-Rac-lammellipodium protrusion cascade. Involved in nephrogenesis. This chain is Nuclear pore complex protein Nup85 (NUP85), found in Homo sapiens (Human).